Reading from the N-terminus, the 333-residue chain is Late embryogenesis abundant protein 1 (333 aa).

Disordered stretches follow at residues 1 to 20 (MASRQDRREARAEADARRAA) and 116 to 246 (KDYT…GQGQ). The stretch at 3–52 (SRQDRREARAEADARRAAEEIARARDERVMQAEVDARSAADEIARARADR) forms a coiled coil. Composition is skewed to basic and acidic residues over residues 116-163 (KDYT…KDAV), 172-219 (EATK…DATK), and 227-241 (DKARETAATHDDATD).

Belongs to the LEA type 4 family.

This is Late embryogenesis abundant protein 1 (LEA1) from Oryza sativa subsp. indica (Rice).